The following is a 190-amino-acid chain: ATP synthase subunit delta (190 aa).

It belongs to the ATPase delta chain family. As to quaternary structure, F-type ATPases have 2 components, F(1) - the catalytic core - and F(0) - the membrane proton channel. F(1) has five subunits: alpha(3), beta(3), gamma(1), delta(1), epsilon(1). F(0) has three main subunits: a(1), b(2) and c(10-14). The alpha and beta chains form an alternating ring which encloses part of the gamma chain. F(1) is attached to F(0) by a central stalk formed by the gamma and epsilon chains, while a peripheral stalk is formed by the delta and b chains.

The protein localises to the cell inner membrane. F(1)F(0) ATP synthase produces ATP from ADP in the presence of a proton or sodium gradient. F-type ATPases consist of two structural domains, F(1) containing the extramembraneous catalytic core and F(0) containing the membrane proton channel, linked together by a central stalk and a peripheral stalk. During catalysis, ATP synthesis in the catalytic domain of F(1) is coupled via a rotary mechanism of the central stalk subunits to proton translocation. Functionally, this protein is part of the stalk that links CF(0) to CF(1). It either transmits conformational changes from CF(0) to CF(1) or is implicated in proton conduction. The sequence is that of ATP synthase subunit delta from Methylobacterium sp. (strain 4-46).